Consider the following 122-residue polypeptide: MAFNKEQFIADLEAMTVLELKELVSALEEHFGVTAAAPVAVAAAGGATEAAEEKTEFDVVLKSAGGNKIAVIKEVRAITGLGLKEAKDLVDNGGVIKEAAPKDEANAIKEKLTAAGAEVEVK.

This sequence belongs to the bacterial ribosomal protein bL12 family. Homodimer. Part of the ribosomal stalk of the 50S ribosomal subunit. Forms a multimeric L10(L12)X complex, where L10 forms an elongated spine to which 2 to 4 L12 dimers bind in a sequential fashion. Binds GTP-bound translation factors.

Forms part of the ribosomal stalk which helps the ribosome interact with GTP-bound translation factors. Is thus essential for accurate translation. This Fusobacterium nucleatum subsp. nucleatum (strain ATCC 25586 / DSM 15643 / BCRC 10681 / CIP 101130 / JCM 8532 / KCTC 2640 / LMG 13131 / VPI 4355) protein is Large ribosomal subunit protein bL12.